We begin with the raw amino-acid sequence, 160 residues long: Cytochrome c-type biogenesis protein CcmE (160 aa).

Over 1 to 8 (MNPRRKKR) the chain is Cytoplasmic. Residues 9 to 29 (LGIILAIFFGISATVGLMVYA) traverse the membrane as a helical; Signal-anchor for type II membrane protein segment. Topologically, residues 30-160 (LNQNMDLFYT…TTEQKEGNAQ (131 aa)) are periplasmic. 2 residues coordinate heme: His128 and Tyr132.

This sequence belongs to the CcmE/CycJ family.

It is found in the cell inner membrane. Its function is as follows. Heme chaperone required for the biogenesis of c-type cytochromes. Transiently binds heme delivered by CcmC and transfers the heme to apo-cytochromes in a process facilitated by CcmF and CcmH. The chain is Cytochrome c-type biogenesis protein CcmE from Vibrio atlanticus (strain LGP32) (Vibrio splendidus (strain Mel32)).